The chain runs to 1380 residues: Tripeptidyl-peptidase 2 (1380 aa).

Residues 110–619 (STFIASLMPK…QGLMQVDKAY (510 aa)) enclose the Peptidase S8 domain. Active-site charge relay system residues include Asp145, His372, and Ser558. The tract at residues 1099–1143 (DEKEGKNPKDNPVSYPISYVVPPNKPEEDKKAASAPTCSKSVSER) is disordered. Positions 1110-1120 (PVSYPISYVVP) are enriched in low complexity. 2 coiled-coil regions span residues 1152 to 1181 (KIKF…KSEY) and 1238 to 1300 (EDDE…ELTK).

Belongs to the peptidase S8 family. In terms of assembly, assembles into a large oligomeric complex containing two related proteins 153 and 142 kDa that are derived from the single TPP2 gene. The 142 kDa form mainly differs from the 153 kDa form by a truncation at the C-terminal end.

The enzyme catalyses Release of an N-terminal tripeptide from a polypeptide.. Inhibited by alanine-alanine-phenylalanine-chloromethylketone, butabindide and phenylmethanesulfonyl fluoride (PMSF), but not by leupeptin, N-ethylmaleimide, EDTA, MG132 and lactacystin. Functionally, serine protease of the proteasome pathway that may function with the 20S proteasome to degrade oxidized proteins generated by environmental stress. This chain is Tripeptidyl-peptidase 2 (TPP2), found in Arabidopsis thaliana (Mouse-ear cress).